Here is an 86-residue protein sequence, read N- to C-terminus: Small ribosomal subunit protein eS27y (86 aa).

Residues 39 to 61 (CQGCFNITTVFSHSQTVVVCGNC) form a C4-type zinc finger.

The protein belongs to the eukaryotic ribosomal protein eS27 family. Requires Zn(2+) as cofactor.

Functionally, may be involved in the elimination of damaged mRNA after UV irradiation. The sequence is that of Small ribosomal subunit protein eS27y (RPS27B) from Arabidopsis thaliana (Mouse-ear cress).